The following is a 191-amino-acid chain: 3-isopropylmalate dehydratase small subunit (191 aa).

This sequence belongs to the LeuD family. LeuD type 1 subfamily. Heterodimer of LeuC and LeuD.

The catalysed reaction is (2R,3S)-3-isopropylmalate = (2S)-2-isopropylmalate. It participates in amino-acid biosynthesis; L-leucine biosynthesis; L-leucine from 3-methyl-2-oxobutanoate: step 2/4. Its function is as follows. Catalyzes the isomerization between 2-isopropylmalate and 3-isopropylmalate, via the formation of 2-isopropylmaleate. The polypeptide is 3-isopropylmalate dehydratase small subunit (Anaeromyxobacter dehalogenans (strain 2CP-C)).